Reading from the N-terminus, the 501-residue chain is Aldehyde dehydrogenase 1A1 (501 aa).

The residue at position 2 (serine 2) is an N-acetylserine. Lysine 91 and lysine 128 each carry N6-acetyllysine. NAD(+) is bound by residues 167 to 170 (IPWN), 193 to 196 (KPAE), 226 to 227 (GP), and 246 to 247 (GS). Lysine 252 bears the N6-acetyllysine mark. Glutamate 269 acts as the Proton acceptor in catalysis. Position 269–271 (269–271 (ELG)) interacts with NAD(+). Catalysis depends on cysteine 303, which acts as the Nucleophile. The interval 336–501 (LTPGINQGPQ…VAMKISQKNS (166 aa)) is mediates interaction with PRMT3. Threonine 337 is subject to Phosphothreonine. An NAD(+)-binding site is contributed by 349-353 (EQHDK). An N6-acetyllysine mark is found at lysine 353 and lysine 367. 400 to 402 (EIF) contributes to the NAD(+) binding site. Lysine 410 is subject to N6-acetyllysine. Serine 413 bears the Phosphoserine mark. N6-acetyllysine is present on residues lysine 419, lysine 435, and lysine 495.

This sequence belongs to the aldehyde dehydrogenase family. Homotetramer. Interacts with PRMT3; the interaction is direct, inhibits ALDH1A1 aldehyde dehydrogenase activity and is independent of the methyltransferase activity of PRMT3. The N-terminus is blocked most probably by acetylation. Expressed in retina. Expressed in lens and cornea (at protein level). Expressed by midbrain dopamine neurons.

It is found in the cytoplasm. The protein resides in the cytosol. Its subcellular location is the cell projection. It localises to the axon. It carries out the reaction an aldehyde + NAD(+) + H2O = a carboxylate + NADH + 2 H(+). It catalyses the reaction all-trans-retinal + NAD(+) + H2O = all-trans-retinoate + NADH + 2 H(+). The catalysed reaction is 9-cis-retinal + NAD(+) + H2O = 9-cis-retinoate + NADH + 2 H(+). The enzyme catalyses 11-cis-retinal + NAD(+) + H2O = 11-cis-retinoate + NADH + 2 H(+). It carries out the reaction 13-cis-retinal + NAD(+) + H2O = 13-cis-retinoate + NADH + 2 H(+). It catalyses the reaction 4-aminobutanal + NAD(+) + H2O = 4-aminobutanoate + NADH + 2 H(+). The catalysed reaction is 3-deoxyglucosone + NAD(+) + H2O = 2-dehydro-3-deoxy-D-gluconate + NADH + 2 H(+). The enzyme catalyses (E)-4-hydroxynon-2-enal + NAD(+) + H2O = (E)-4-hydroxynon-2-enoate + NADH + 2 H(+). It carries out the reaction malonaldehyde + NAD(+) + H2O = 3-oxopropanoate + NADH + 2 H(+). It catalyses the reaction hexanal + NAD(+) + H2O = hexanoate + NADH + 2 H(+). The catalysed reaction is propanal + NAD(+) + H2O = propanoate + NADH + 2 H(+). The enzyme catalyses acetaldehyde + NAD(+) + H2O = acetate + NADH + 2 H(+). It carries out the reaction benzaldehyde + NAD(+) + H2O = benzoate + NADH + 2 H(+). Its pathway is cofactor metabolism; retinol metabolism. With respect to regulation, the aminobutyraldehyde dehydrogenase activity is negatively regulated by ethanol in vivo. Functionally, cytosolic dehydrogenase that catalyzes the irreversible oxidation of a wide range of aldehydes to their corresponding carboxylic acid. Functions downstream of retinol dehydrogenases and catalyzes the oxidation of retinaldehyde into retinoic acid, the second step in the oxidation of retinol/vitamin A into retinoic acid. This pathway is crucial to control the levels of retinol and retinoic acid, two important molecules which excess can be teratogenic and cytotoxic. Also oxidizes aldehydes resulting from lipid peroxidation like (E)-4-hydroxynon-2-enal/HNE, malonaldehyde and hexanal that form protein adducts and are highly cytotoxic. By participating for instance to the clearance of (E)-4-hydroxynon-2-enal/HNE in the lens epithelium prevents the formation of HNE-protein adducts and lens opacification. Also functions downstream of fructosamine-3-kinase in the fructosamine degradation pathway by catalyzing the oxidation of 3-deoxyglucosone, the carbohydrate product of fructosamine 3-phosphate decomposition, which is itself a potent glycating agent that may react with lysine and arginine side-chains of proteins. Also has an aminobutyraldehyde dehydrogenase activity and is probably part of an alternative pathway for the biosynthesis of GABA/4-aminobutanoate in midbrain, thereby playing a role in GABAergic synaptic transmission. In Mus musculus (Mouse), this protein is Aldehyde dehydrogenase 1A1.